A 134-amino-acid polypeptide reads, in one-letter code: MAEKIKLEIVTPEKKVLSEMVDIVVAPGQEGEFGVLPHHIPFLSKLKVGELRYRIGQTLRCVAIMGGYAEVLPDQVTILAPAAEEAGEIDVIRAKAARERAERRLAETKDRLEFTRAQAALQRAVARLKVAEKT.

This sequence belongs to the ATPase epsilon chain family. F-type ATPases have 2 components, CF(1) - the catalytic core - and CF(0) - the membrane proton channel. CF(1) has five subunits: alpha(3), beta(3), gamma(1), delta(1), epsilon(1). CF(0) has three main subunits: a, b and c.

Its subcellular location is the cell inner membrane. In terms of biological role, produces ATP from ADP in the presence of a proton gradient across the membrane. The chain is ATP synthase epsilon chain from Syntrophobacter fumaroxidans (strain DSM 10017 / MPOB).